Consider the following 293-residue polypeptide: AM-toxin biosynthesis protein 14 (293 aa).

The next 5 membrane-spanning stretches (helical) occupy residues 33-53 (SATASLPIGFSSLFLLTEVYI), 73-93 (IAVNTGLWICCLVLSIVALVL), 148-168 (GVLALVLTACLQCAAAGLCVW), 183-203 (LVPILHVGWGLHYTVFLLWIL), and 221-241 (VWCLLVAPLFISALVGATPLT).

It localises to the membrane. It functions in the pathway mycotoxin biosynthesis. Functionally, part of the gene clusters that mediate the biosynthesis of AM-toxins, host-selective toxins (HSTs) causing Alternaria blotch on apple, a worldwide distributed disease. AM-toxins are cyclic depsipeptides containing the 3 residues 2-hydroxy-isovaleric acid (2-HIV), dehydroalanine, L-alanine which are common for all 3 AM-toxins I to III. The fourth precursor is L-alpha-amino-methoxyphenyl-valeric acid (L-Amv) for AM-toxin I, L-alpha-amino-phenyl-valeric acid (L-Apv) for AM-toxin II, and L-alpha-amino-hydroxyphenyl-valeric acid (L-Ahv) for AM-toxin III. AM-toxins have two target sites for affecting susceptible apple cells; they cause invagination of the plasma membrane and electrolyte loss and chloroplast disorganization. The non-ribosomal peptide synthetase AMT1 contains 4 catalytic modules and is responsible for activation of each residue in AM-toxin. The aldo-keto reductase AMT2 catalyzes the conversion of 2-keto-isovaleric acid (2-KIV) to 2-hydroxy-isovaleric acid (2-HIV), one of the precursor residues incorporated by AMT1 during AM-toxin biosynthesis, by reduction of its ketone to an alcohol. The cytochrome P450 monooxygenase AMT3 and the thioesterase AMT4 are also important for AM-toxin production, but their exact function within the AM-toxin biosynthesis are not known yet. Up to 21 proteins (including AMT1 to AMT4) are predicted to be involved in AM-toxin biosynthesis since their expression ishighly up-regulated in AM-toxin-producing cultures. This is AM-toxin biosynthesis protein 14 from Alternaria alternata (Alternaria rot fungus).